We begin with the raw amino-acid sequence, 92 residues long: MGRISLIVAALLMLSAISLVTSRYQSRQLFIELGRSQAEARDLDTNWRRLQLERAELARNARIDRAARDDLKMIPIVPDRTLYMNQPAGGAQ.

At 1–3 the chain is on the cytoplasmic side; it reads MGR. Residues 4 to 21 traverse the membrane as a helical segment; the sequence is ISLIVAALLMLSAISLVT. The Periplasmic portion of the chain corresponds to 22–92; it reads SRYQSRQLFI…YMNQPAGGAQ (71 aa).

This sequence belongs to the FtsL family. In terms of assembly, part of a complex composed of FtsB, FtsL and FtsQ.

It is found in the cell inner membrane. In terms of biological role, essential cell division protein. May link together the upstream cell division proteins, which are predominantly cytoplasmic, with the downstream cell division proteins, which are predominantly periplasmic. This chain is Cell division protein FtsL, found in Bordetella pertussis (strain Tohama I / ATCC BAA-589 / NCTC 13251).